The following is an 82-amino-acid chain: RNA-binding protein GK0100 (82 aa).

It belongs to the eukaryotic ribosomal protein eL8 family.

The sequence is that of RNA-binding protein GK0100 from Geobacillus kaustophilus (strain HTA426).